Consider the following 425-residue polypeptide: Histidine--tRNA ligase 1 (425 aa).

The protein belongs to the class-II aminoacyl-tRNA synthetase family. Homodimer.

It is found in the cytoplasm. It carries out the reaction tRNA(His) + L-histidine + ATP = L-histidyl-tRNA(His) + AMP + diphosphate + H(+). The protein is Histidine--tRNA ligase 1 of Bacillus thuringiensis subsp. konkukian (strain 97-27).